Consider the following 205-residue polypeptide: Putative 3-methyladenine DNA glycosylase (205 aa).

The protein belongs to the DNA glycosylase MPG family.

The sequence is that of Putative 3-methyladenine DNA glycosylase from Staphylococcus epidermidis (strain ATCC 35984 / DSM 28319 / BCRC 17069 / CCUG 31568 / BM 3577 / RP62A).